The following is a 396-amino-acid chain: L-lactate dehydrogenase (396 aa).

Residues 1–380 (MIISAASDYR…SGDSLVQELG (380 aa)) enclose the FMN hydroxy acid dehydrogenase domain. Tyr-24 contacts substrate. FMN is bound by residues Ser-106 and Gln-127. Tyr-129 contacts substrate. Thr-155 contacts FMN. A substrate-binding site is contributed by Arg-164. Lys-251 contributes to the FMN binding site. Residue His-275 is the Proton acceptor of the active site. Arg-278 contacts substrate. 306-330 (DSGIRNGLDVVRMIALGADTVLLGR) contacts FMN.

It belongs to the FMN-dependent alpha-hydroxy acid dehydrogenase family. It depends on FMN as a cofactor.

Its subcellular location is the cell inner membrane. It carries out the reaction (S)-lactate + A = pyruvate + AH2. Catalyzes the conversion of L-lactate to pyruvate. Is coupled to the respiratory chain. The polypeptide is L-lactate dehydrogenase (Salmonella heidelberg (strain SL476)).